The primary structure comprises 480 residues: Cobyric acid synthase (480 aa).

Residues 246-434 (KILIAVPILP…VHGLFSELAQ (189 aa)) form the GATase cobBQ-type domain. Cys328 acts as the Nucleophile in catalysis. The active site involves His426.

This sequence belongs to the CobB/CobQ family. CobQ subfamily.

Its pathway is cofactor biosynthesis; adenosylcobalamin biosynthesis. Functionally, catalyzes amidations at positions B, D, E, and G on adenosylcobyrinic A,C-diamide. NH(2) groups are provided by glutamine, and one molecule of ATP is hydrogenolyzed for each amidation. This is Cobyric acid synthase from Methylocella silvestris (strain DSM 15510 / CIP 108128 / LMG 27833 / NCIMB 13906 / BL2).